The primary structure comprises 103 residues: Small ribosomal subunit protein uS10 (103 aa).

The protein belongs to the universal ribosomal protein uS10 family. Part of the 30S ribosomal subunit.

Functionally, involved in the binding of tRNA to the ribosomes. The protein is Small ribosomal subunit protein uS10 of Alcanivorax borkumensis (strain ATCC 700651 / DSM 11573 / NCIMB 13689 / SK2).